A 2481-amino-acid polypeptide reads, in one-letter code: Tetratricopeptide repeat protein 28 (2481 aa).

M1 is subject to N-acetylmethionine. Positions 1 to 14 are enriched in pro residues; the sequence is MEQSPPPAPEPTQG. Positions 1–48 are disordered; sequence MEQSPPPAPEPTQGPTPARSRRRREPESPPASAPIPLFGADTIGQRSP. At S28 the chain carries Phosphoserine. 28 TPR repeats span residues 58 to 91, 93 to 125, 126 to 159, 196 to 229, 234 to 267, 274 to 307, 314 to 347, 354 to 387, 394 to 427, 434 to 467, 474 to 507, 514 to 547, 554 to 587, 594 to 627, 634 to 667, 674 to 707, 714 to 747, 754 to 787, 794 to 827, 834 to 867, 877 to 910, 917 to 950, 957 to 990, 997 to 1030, 1037 to 1070, 1077 to 1110, 1117 to 1150, and 1169 to 1202; these read FVEKVRQSNQACHDGDFHTAIVLYNEALAVDPQN, ILYSNRSAAYMKIQQYDKALDDAIKARLLNPKW, PKAYFRQGVALQYLGRHADALAAFASGLAQDPKS, FVVVSVVGQELLTAGHHGASVVVLEAALKIGTCS, GSVFSALSSAYWSLGNTEKSTGYMQQDLDVAKTL, CRAHGNLGSAFFSKGNYREALTNHRHQLVLAMKL, SSALSSLGHVYTAIGDYPNALASHKQCVLLAKQS, ARELGNMGAVYIAMGDFENAVQCHEQHLKIAKDL, ARAYSNLGSAYHYRRNFDKAMSYHNYVLELAQEL, MRAYAGLGHAARCMQDLERAKQYHEQQLGIAEDL, GRASSNLGIIHQMKGDYDTALKLHKTHLCIAQEL, GRAYGNMGNAYNALGMYDQAVKYHRQELQISMEV, ASTHGNLAVAYQALGAHDRALQHYQNHLNIAREL, ARALSNLGNFHCSRGEYVQAAPYYEQYLRLAPDL, GKVCHNLGYAHYCLGNYQEAVKYYEQDLALAKDL, AKAYCNLGLAFKALLNFSKAEECQKYLLSLAQSL, FRALGNLGDIFICKKDINGAIKFYEQQLGLAHQV, ASAYAALGTAYRMIQKYDKALGYHTQELEVYQEL, CRAHGHLAAVYMALGKYTMAFKCYEEQLDLGQKL, AQVYGNMGITKMNMNVMEEAIGYFEQQLAMLQQL, GRAYGNLGDCYEALGDYEEAIKYYEQYLSVAQSL, AKAYRGLGNGHRAMGSLQQALVCFEKRLVVAHEL, AQAYGELGSLHSQLGNYEQAISCLERQLNIARDM, SDAACGLGGVYQQMGEYDTALQYHQLDLQIAEET, GRAYGNLGLTYESLGTFERAVVYQEQHLSIAAQM, TVSYSSLGRTHHALQNYSQAVMYLQEGLRLAEQL, AKIRHGLGLSLWASGNLEEAQHQLYRASALFETI, and TSSYQALQRVLVSLGHHDEALAVAERGRTRAFAD. Residue S1590 is modified to Phosphoserine. 3 disordered regions span residues 2004-2055, 2075-2161, and 2176-2339; these read FVSK…DEEE, NTCF…DPQE, and AVER…PADA. 2 stretches are compositionally biased toward polar residues: residues 2029 to 2043 and 2096 to 2122; these read AYLQRSTLPRSQLPP and SVSSKGSISTPNSPVKMTLIPSPNSPF. At S2104 the chain carries Phosphoserine. The segment covering 2130–2146 has biased composition (low complexity); the sequence is SSDTGESDQSSTETDST. The span at 2149 to 2159 shows a compositional bias: basic and acidic residues; it reads SQEESNPKLDP. Over residues 2183-2214 the composition is skewed to polar residues; sequence SGGQVSKSNNPEDGVQAPSSTAVFRASETSAF. Phosphoserine is present on residues S2224 and S2251. Polar residues predominate over residues 2238-2282; it reads RSSSLPKVSSGYSSPTTSEMSIKDSPSQHSGRPSPGCDSQTSQLD. Residues 2307–2339 show a composition bias toward low complexity; sequence SPSSGHQSPAGSAPSPALSYSSAGSARSSPADA. Phosphoserine is present on residues S2393 and S2398. Residues 2420-2467 are disordered; that stretch reads QHDGAPPKAPPNGHWRTETTSLGSLPLPAGPPATAPARPLRLPSGNGY.

Interacts with AURKB. In terms of tissue distribution, widely expressed in fetal tissues. In adult tissues, expressed in testis and ovary and, at much lower levels, in kidney and pancreas.

The protein resides in the cytoplasm. The protein localises to the cytoskeleton. Its subcellular location is the microtubule organizing center. It is found in the centrosome. It localises to the spindle. The protein resides in the spindle pole. The protein localises to the midbody. During mitosis, may be involved in the condensation of spindle midzone microtubules, leading to the formation of midbody. The protein is Tetratricopeptide repeat protein 28 (TTC28) of Homo sapiens (Human).